A 359-amino-acid polypeptide reads, in one-letter code: Cytochrome c oxidase subunit 2 (359 aa).

The N-terminal stretch at 1-28 is a signal peptide; it reads MEQQNKRGLKRKALLGGVLGSGGLAMAG. A lipid anchor (N-palmitoyl cysteine) is attached at Cys-29. Cys-29 carries the S-diacylglycerol cysteine lipid modification. Helical transmembrane passes span 64–84 and 107–127; these read VWVA…TAIF and VPLE…LFFF. Cu cation contacts are provided by His-244, Cys-285, Glu-287, Cys-289, His-293, and Met-296. Residues 338 to 359 form a disordered region; it reads STAPFVSDRTGTRDGENFQTPA.

Belongs to the cytochrome c oxidase subunit 2 family. In terms of assembly, associates with subunits I, III and IV to form cytochrome c oxidase. It depends on binuclear copper center (CuA) as a cofactor.

Its subcellular location is the cell membrane. The catalysed reaction is 4 Fe(II)-[cytochrome c] + O2 + 8 H(+)(in) = 4 Fe(III)-[cytochrome c] + 2 H2O + 4 H(+)(out). In terms of biological role, subunits I and II form the functional core of the enzyme complex. Electrons originating in cytochrome c are transferred via heme a and Cu(A) to the binuclear center formed by heme a3 and Cu(B). The protein is Cytochrome c oxidase subunit 2 (ctaC) of Corynebacterium efficiens (strain DSM 44549 / YS-314 / AJ 12310 / JCM 11189 / NBRC 100395).